The primary structure comprises 333 residues: Adenosine deaminase (333 aa).

2 residues coordinate Zn(2+): His-12 and His-14. Residues His-14, Asp-16, and Gly-170 each contribute to the substrate site. His-197 is a binding site for Zn(2+). The active-site Proton donor is Glu-200. Residue Asp-278 coordinates Zn(2+). Asp-279 provides a ligand contact to substrate.

It belongs to the metallo-dependent hydrolases superfamily. Adenosine and AMP deaminases family. Adenosine deaminase subfamily. Requires Zn(2+) as cofactor.

It carries out the reaction adenosine + H2O + H(+) = inosine + NH4(+). The catalysed reaction is 2'-deoxyadenosine + H2O + H(+) = 2'-deoxyinosine + NH4(+). Functionally, catalyzes the hydrolytic deamination of adenosine and 2-deoxyadenosine. The protein is Adenosine deaminase of Shigella sonnei (strain Ss046).